The following is a 462-amino-acid chain: Cysteine--tRNA ligase (462 aa).

Cysteine 29 contributes to the Zn(2+) binding site. Residues 31–41 (MTVYDLCHLGH) carry the 'HIGH' region motif. Zn(2+)-binding residues include cysteine 217, histidine 242, and glutamate 246. A 'KMSKS' region motif is present at residues 274–278 (KMSKS). An ATP-binding site is contributed by lysine 277.

The protein belongs to the class-I aminoacyl-tRNA synthetase family. In terms of assembly, monomer. It depends on Zn(2+) as a cofactor.

It localises to the cytoplasm. The catalysed reaction is tRNA(Cys) + L-cysteine + ATP = L-cysteinyl-tRNA(Cys) + AMP + diphosphate. This chain is Cysteine--tRNA ligase, found in Polaromonas sp. (strain JS666 / ATCC BAA-500).